Reading from the N-terminus, the 111-residue chain is Cornifelin homolog A (111 aa).

It belongs to the cornifelin family.

The protein is Cornifelin homolog A (cnfn-a) of Xenopus laevis (African clawed frog).